A 68-amino-acid chain; its full sequence is Large ribosomal subunit protein uL29 (68 aa).

Belongs to the universal ribosomal protein uL29 family.

The sequence is that of Large ribosomal subunit protein uL29 from Chloroflexus aurantiacus (strain ATCC 29364 / DSM 637 / Y-400-fl).